A 377-amino-acid chain; its full sequence is Chaperone protein DnaJ (377 aa).

In terms of domain architecture, J spans 5–70; it reads DFYETLGVSK…QKRAAYDRFG (66 aa). Residues 138–216 form a CR-type zinc finger; that stretch reads GKTAQIRVPT…CHGQGRVTEE (79 aa). Positions 151, 154, 168, 171, 190, 193, 204, and 207 each coordinate Zn(2+). 4 CXXCXGXG motif repeats span residues 151–158, 168–175, 190–197, and 204–211; these read CDVCSGSG, CATCQGSG, CPTCHGRG, and CGKCHGQG.

It belongs to the DnaJ family. In terms of assembly, homodimer. Zn(2+) is required as a cofactor.

It localises to the cytoplasm. Participates actively in the response to hyperosmotic and heat shock by preventing the aggregation of stress-denatured proteins and by disaggregating proteins, also in an autonomous, DnaK-independent fashion. Unfolded proteins bind initially to DnaJ; upon interaction with the DnaJ-bound protein, DnaK hydrolyzes its bound ATP, resulting in the formation of a stable complex. GrpE releases ADP from DnaK; ATP binding to DnaK triggers the release of the substrate protein, thus completing the reaction cycle. Several rounds of ATP-dependent interactions between DnaJ, DnaK and GrpE are required for fully efficient folding. Also involved, together with DnaK and GrpE, in the DNA replication of plasmids through activation of initiation proteins. This is Chaperone protein DnaJ from Agrobacterium fabrum (strain C58 / ATCC 33970) (Agrobacterium tumefaciens (strain C58)).